We begin with the raw amino-acid sequence, 182 residues long: uncharacterized protein (182 aa).

A run of 2 helical transmembrane segments spans residues 76–96 (LLLA…LALA) and 114–130 (LDLL…LIGA).

The protein resides in the membrane. This is an uncharacterized protein from Saccharomyces cerevisiae (strain ATCC 204508 / S288c) (Baker's yeast).